We begin with the raw amino-acid sequence, 568 residues long: 2-succinyl-5-enolpyruvyl-6-hydroxy-3-cyclohexene-1-carboxylate synthase (568 aa).

It belongs to the TPP enzyme family. MenD subfamily. Homodimer. It depends on Mg(2+) as a cofactor. Mn(2+) is required as a cofactor. Requires thiamine diphosphate as cofactor.

It carries out the reaction isochorismate + 2-oxoglutarate + H(+) = 5-enolpyruvoyl-6-hydroxy-2-succinyl-cyclohex-3-ene-1-carboxylate + CO2. It participates in quinol/quinone metabolism; 1,4-dihydroxy-2-naphthoate biosynthesis; 1,4-dihydroxy-2-naphthoate from chorismate: step 2/7. The protein operates within quinol/quinone metabolism; menaquinone biosynthesis. In terms of biological role, catalyzes the thiamine diphosphate-dependent decarboxylation of 2-oxoglutarate and the subsequent addition of the resulting succinic semialdehyde-thiamine pyrophosphate anion to isochorismate to yield 2-succinyl-5-enolpyruvyl-6-hydroxy-3-cyclohexene-1-carboxylate (SEPHCHC). This chain is 2-succinyl-5-enolpyruvyl-6-hydroxy-3-cyclohexene-1-carboxylate synthase, found in Haemophilus influenzae (strain 86-028NP).